The primary structure comprises 138 residues: Large ribosomal subunit protein uL16 (138 aa).

Residues 1–16 (MLIPRRVKHRKQHHPS) show a composition bias toward basic residues. Residues 1–25 (MLIPRRVKHRKQHHPSRSGAAKGGT) are disordered.

This sequence belongs to the universal ribosomal protein uL16 family. As to quaternary structure, part of the 50S ribosomal subunit.

Its function is as follows. Binds 23S rRNA and is also seen to make contacts with the A and possibly P site tRNAs. In Rhodococcus jostii (strain RHA1), this protein is Large ribosomal subunit protein uL16.